The primary structure comprises 169 residues: Ubiquitin-fold modifier-conjugating enzyme 1 (169 aa).

The active-site Glycyl thioester intermediate is the Cys116.

It belongs to the ubiquitin-conjugating enzyme family. UFC1 subfamily.

Functionally, E2-like enzyme which forms an intermediate with UFM1 via a thioester linkage. The chain is Ubiquitin-fold modifier-conjugating enzyme 1 from Branchiostoma floridae (Florida lancelet).